Here is a 236-residue protein sequence, read N- to C-terminus: 4-hydroxy-tetrahydrodipicolinate reductase (236 aa).

NAD(+) is bound by residues 11-16 (GASGRM), 92-94 (GTT), and 116-119 (GSNF). Catalysis depends on His-148, which acts as the Proton donor/acceptor. His-149 serves as a coordination point for (S)-2,3,4,5-tetrahydrodipicolinate. The active-site Proton donor is the Lys-152. 158–159 (GS) is a (S)-2,3,4,5-tetrahydrodipicolinate binding site.

This sequence belongs to the DapB family.

It is found in the cytoplasm. It carries out the reaction (S)-2,3,4,5-tetrahydrodipicolinate + NAD(+) + H2O = (2S,4S)-4-hydroxy-2,3,4,5-tetrahydrodipicolinate + NADH + H(+). The enzyme catalyses (S)-2,3,4,5-tetrahydrodipicolinate + NADP(+) + H2O = (2S,4S)-4-hydroxy-2,3,4,5-tetrahydrodipicolinate + NADPH + H(+). The protein operates within amino-acid biosynthesis; L-lysine biosynthesis via DAP pathway; (S)-tetrahydrodipicolinate from L-aspartate: step 4/4. Its function is as follows. Catalyzes the conversion of 4-hydroxy-tetrahydrodipicolinate (HTPA) to tetrahydrodipicolinate. The protein is 4-hydroxy-tetrahydrodipicolinate reductase of Xylella fastidiosa (strain M23).